A 550-amino-acid chain; its full sequence is Glucose-6-phosphate isomerase (550 aa).

Glutamate 356 (proton donor) is an active-site residue. Active-site residues include histidine 387 and lysine 515.

The protein belongs to the GPI family.

The protein localises to the cytoplasm. The enzyme catalyses alpha-D-glucose 6-phosphate = beta-D-fructose 6-phosphate. It functions in the pathway carbohydrate biosynthesis; gluconeogenesis. The protein operates within carbohydrate degradation; glycolysis; D-glyceraldehyde 3-phosphate and glycerone phosphate from D-glucose: step 2/4. Catalyzes the reversible isomerization of glucose-6-phosphate to fructose-6-phosphate. The protein is Glucose-6-phosphate isomerase of Aliivibrio salmonicida (strain LFI1238) (Vibrio salmonicida (strain LFI1238)).